Consider the following 170-residue polypeptide: ATP synthase F(1) complex subunit delta, mitochondrial (170 aa).

A mitochondrion-targeting transit peptide spans 1–33 (MIRSIIKSSNNLLKSNVAINSNKRFFATEASAT).

The protein belongs to the ATPase epsilon chain family. Component of the ATP synthase complex composed at least of ATP5F1A/subunit alpha, ATP5F1B/subunit beta, ATP5MC1/subunit c (homooctomer), MT-ATP6/subunit a, MT-ATP8/subunit 8, ATP5ME/subunit e, ATP5MF/subunit f, ATP5MG/subunit g, ATP5MK/subunit k, ATP5MJ/subunit j, ATP5F1C/subunit gamma, ATP5F1D/subunit delta, ATP5F1E/subunit epsilon, ATP5PF/subunit F6, ATP5PB/subunit b, ATP5PD/subunit d, ATP5PO/subunit OSCP. ATP synthase complex consists of a soluble F(1) head domain (subunits alpha(3) and beta(3)) - the catalytic core - and a membrane F(0) domain - the membrane proton channel (subunits c, a, 8, e, f, g, k and j). These two domains are linked by a central stalk (subunits gamma, delta, and epsilon) rotating inside the F1 region and a stationary peripheral stalk (subunits F6, b, d, and OSCP).

The protein localises to the mitochondrion. It is found in the mitochondrion inner membrane. Functionally, subunit delta, of the mitochondrial membrane ATP synthase complex (F(1)F(0) ATP synthase or Complex V) that produces ATP from ADP in the presence of a proton gradient across the membrane which is generated by electron transport complexes of the respiratory chain. ATP synthase complex consist of a soluble F(1) head domain - the catalytic core - and a membrane F(1) domain - the membrane proton channel. These two domains are linked by a central stalk rotating inside the F(1) region and a stationary peripheral stalk. During catalysis, ATP synthesis in the catalytic domain of F(1) is coupled via a rotary mechanism of the central stalk subunits to proton translocation. In vivo, can only synthesize ATP although its ATP hydrolase activity can be activated artificially in vitro. With the central stalk subunit gamma, is essential for the biogenesis of F(1) catalytic part of the ATP synthase complex namely in the formation of F1 assembly intermediate. This chain is ATP synthase F(1) complex subunit delta, mitochondrial, found in Dictyostelium discoideum (Social amoeba).